Here is a 134-residue protein sequence, read N- to C-terminus: Small ribosomal subunit protein uS12 (134 aa).

Residues 1-26 are disordered; that stretch reads MPTIQQLVRKGRESFADKSKSPALNS. Over residues 10 to 20 the composition is skewed to basic and acidic residues; it reads KGRESFADKSK. Position 89 is a 3-methylthioaspartic acid (aspartate 89). Residues 103 to 134 form a disordered region; it reads DTAGVNGRTQRRSKYGAKRPKPGQAPAAKGKK. Basic residues predominate over residues 111-123; that stretch reads TQRRSKYGAKRPK. Over residues 124–134 the composition is skewed to low complexity; the sequence is PGQAPAAKGKK.

This sequence belongs to the universal ribosomal protein uS12 family. As to quaternary structure, part of the 30S ribosomal subunit. Contacts proteins S8 and S17. May interact with IF1 in the 30S initiation complex.

Its function is as follows. With S4 and S5 plays an important role in translational accuracy. Functionally, interacts with and stabilizes bases of the 16S rRNA that are involved in tRNA selection in the A site and with the mRNA backbone. Located at the interface of the 30S and 50S subunits, it traverses the body of the 30S subunit contacting proteins on the other side and probably holding the rRNA structure together. The combined cluster of proteins S8, S12 and S17 appears to hold together the shoulder and platform of the 30S subunit. The polypeptide is Small ribosomal subunit protein uS12 (Porphyromonas gingivalis (strain ATCC BAA-308 / W83)).